Consider the following 485-residue polypeptide: MVEAVADIGLIGLAVMGQNLILNMNDHGFVVCAYNRTTSKVDDFLANEAKGTNVVGAHSVEELCAKLKRPRKVMLLVKAGSAVDAFIDQLLPHLEEGDIIIDGGNSHFPDSIRRTKELEAKGILFVGSGVSGGEEGARYGPSLMPGGNSKAWEHIQPIFQAIAAKAPDGASCCEWVGETGAGHYVKMVHNGIEYGDMQLITEVYQILHEGLGLSHDEMADIFEEWNKGDLDSFLIEITRDILRFKDTDGQPLVTKIRDTAGQKGTGKWTAIDSLDRGIPVTLIGEAVYSRCLSSLKDERVRASKILQGPSSSKFTGDKKTFIAQLGQALYAAKIVSYAQGYMLMRQAAKDYEWKLNNAGIALMWRGGCIIRSVFLGKIRDAYTKNPELENLLFDDFFKDATAKAQDAWRNVTAQAVLMGIPTPALSTALNFYDGLRHEILPANLLQAQRDYFGAHTYELLHTPGKWVHTNWTGRGGNVSASTYDA.

NADP(+)-binding positions include 12 to 17, 35 to 37, 77 to 79, and asparagine 105; these read GLAVMG, NRT, and VKA. Substrate contacts are provided by residues asparagine 105 and 131-133; that span reads SGG. The active-site Proton acceptor is the lysine 186. 189 to 190 contributes to the substrate binding site; it reads HN. The active-site Proton donor is glutamate 193. Tyrosine 194, lysine 263, arginine 290, arginine 449, and histidine 455 together coordinate substrate.

Belongs to the 6-phosphogluconate dehydrogenase family. Homodimer.

It carries out the reaction 6-phospho-D-gluconate + NADP(+) = D-ribulose 5-phosphate + CO2 + NADPH. It functions in the pathway carbohydrate degradation; pentose phosphate pathway; D-ribulose 5-phosphate from D-glucose 6-phosphate (oxidative stage): step 3/3. In terms of biological role, catalyzes the oxidative decarboxylation of 6-phosphogluconate to ribulose 5-phosphate and CO(2), with concomitant reduction of NADP to NADPH. In Cunninghamella elegans, this protein is 6-phosphogluconate dehydrogenase, decarboxylating (6-PGD).